Consider the following 151-residue polypeptide: Troponin C, isoallergen Bla g 6.0101 (151 aa).

4 consecutive EF-hand domains span residues 7-42 (EQIQ…LGHR), 43-78 (LDDD…FLVE), 83-118 (AMQQ…LDDK), and 119-151 (ITAE…MTGE). Residues aspartate 56, aspartate 58, serine 60, glutamate 62, and glutamate 67 each contribute to the Ca(2+) site. Residues aspartate 132, aspartate 134, serine 136, threonine 138, and glutamate 143 each coordinate Ca(2+).

Belongs to the troponin C family.

Functionally, troponin is the central regulatory protein of striated muscle contraction. It consists of three components: Troponin-I (Tn-I) which is the inhibitor of actomyosin ATPase, Troponin-T (Tn-T) which contains the binding site for tropomyosin and Troponin-C (Tn-C). The binding of calcium to Tn-C abolishes the inhibitory action of Tn on actin filaments. The protein is Troponin C, isoallergen Bla g 6.0101 of Blattella germanica (German cockroach).